We begin with the raw amino-acid sequence, 692 residues long: Proprotein convertase subtilisin/kexin type 9 (692 aa).

Positions 1-30 (MGTVSSRRSWWPLPLLLLLLLLLGPAGARA) are cleaved as a signal peptide. The propeptide occupies 31–152 (QEDEDGDYEE…IEEDSSVFAQ (122 aa)). Tyr-38 is subject to Sulfotyrosine. A Phosphoserine modification is found at Ser-47. The Inhibitor I9 domain occupies 77-149 (TYVVVLKEET…VDYIEEDSSV (73 aa)). The region spanning 155–461 (PWNLERITPP…GWQLFCRTVW (307 aa)) is the Peptidase S8 domain. Residues Asp-186 and His-226 each act as charge relay system in the active site. 2 disulfides stabilise this stretch: Cys-223–Cys-255 and Cys-323–Cys-358. The active-site Charge relay system is Ser-386. The interval 450–692 (GAGWQLFCRT…HLAQASQELQ (243 aa)) is C-terminal domain. 3 disulfide bridges follow: Cys-457/Cys-527, Cys-477/Cys-526, and Cys-486/Cys-509. Residue Asn-533 is glycosylated (N-linked (GlcNAc...) asparagine). 6 cysteine pairs are disulfide-bonded: Cys-534–Cys-601, Cys-552–Cys-600, Cys-562–Cys-588, Cys-608–Cys-679, Cys-626–Cys-678, and Cys-635–Cys-654. Position 688 is a phosphoserine (Ser-688).

The protein belongs to the peptidase S8 family. Monomer. Can self-associate to form dimers and higher multimers which may have increased LDLR degrading activity. The precursor protein but not the mature protein may form multimers. Interacts with APOB, VLDLR, LRP8/APOER2 and BACE1. The full-length immature form (pro-PCSK9) interacts with SCNN1A, SCNN1B and SCNN1G. The pro-PCSK9 form (via C-terminal domain) interacts with LDLR. Interacts (via the C-terminal domain) with ANXA2 (via repeat Annexin 1); the interaction inhibits the degradation of LDLR. It depends on Ca(2+) as a cofactor. In terms of processing, cleavage by furin and PCSK5 generates a truncated inactive protein that is unable to induce LDLR degradation. Undergoes autocatalytic cleavage in the endoplasmic reticulum to release the propeptide from the N-terminus and the cleavage of the propeptide is strictly required for its maturation and activation. The cleaved propeptide however remains associated with the catalytic domain through non-covalent interactions, preventing potential substrates from accessing its active site. As a result, it is secreted from cells as a propeptide-containing, enzymatically inactive protein. Post-translationally, phosphorylation protects the propeptide against proteolysis.

The protein localises to the cytoplasm. The protein resides in the secreted. It localises to the endosome. It is found in the lysosome. Its subcellular location is the cell surface. The protein localises to the endoplasmic reticulum. The protein resides in the golgi apparatus. Its proteolytic activity is autoinhibited by the non-covalent binding of the propeptide to the catalytic domain. Inhibited by EGTA. Crucial player in the regulation of plasma cholesterol homeostasis. Binds to low-density lipid receptor family members: low density lipoprotein receptor (LDLR), very low density lipoprotein receptor (VLDLR), apolipoprotein E receptor (LRP1/APOER) and apolipoprotein receptor 2 (LRP8/APOER2), and promotes their degradation in intracellular acidic compartments. Acts via a non-proteolytic mechanism to enhance the degradation of the hepatic LDLR through a clathrin LDLRAP1/ARH-mediated pathway. May prevent the recycling of LDLR from endosomes to the cell surface or direct it to lysosomes for degradation. Can induce ubiquitination of LDLR leading to its subsequent degradation. Inhibits intracellular degradation of APOB via the autophagosome/lysosome pathway in a LDLR-independent manner. Involved in the disposal of non-acetylated intermediates of BACE1 in the early secretory pathway. Inhibits epithelial Na(+) channel (ENaC)-mediated Na(+) absorption by reducing ENaC surface expression primarily by increasing its proteasomal degradation. Regulates neuronal apoptosis via modulation of LRP8/APOER2 levels and related anti-apoptotic signaling pathways. The sequence is that of Proprotein convertase subtilisin/kexin type 9 (PCSK9) from Pan troglodytes (Chimpanzee).